Consider the following 287-residue polypeptide: Protease HtpX (287 aa).

2 helical membrane passes run 4 to 24 (ILLFLATNLAVVLVLSVVLNI) and 36 to 56 (LSGLLVMAAVFGFGGAFISLL). H143 contributes to the Zn(2+) binding site. E144 is an active-site residue. H147 contributes to the Zn(2+) binding site. 2 helical membrane passes run 158–178 (LMQGVVNTFVIFLSRFIANIV) and 192–212 (MVYFGVSMVLELVFGFLASFI). Residue E221 participates in Zn(2+) binding.

Belongs to the peptidase M48B family. Zn(2+) is required as a cofactor.

Its subcellular location is the cell inner membrane. This chain is Protease HtpX, found in Vibrio cholerae serotype O1 (strain ATCC 39315 / El Tor Inaba N16961).